We begin with the raw amino-acid sequence, 182 residues long: Isopentenyl-diphosphate Delta-isomerase (182 aa).

Mn(2+)-binding residues include His-25 and His-32. The Nudix hydrolase domain maps to 30 to 164; that stretch reads LLHLAFSSWL…PWAFSPWMVM (135 aa). Cys-67 is a catalytic residue. His-69 lines the Mn(2+) pocket. Mg(2+) is bound at residue Glu-87. Positions 114 and 116 each coordinate Mn(2+). Residue Glu-116 is part of the active site.

It belongs to the IPP isomerase type 1 family. As to quaternary structure, homodimer. The cofactor is Mg(2+). Mn(2+) serves as cofactor.

It localises to the cytoplasm. The enzyme catalyses isopentenyl diphosphate = dimethylallyl diphosphate. It functions in the pathway isoprenoid biosynthesis; dimethylallyl diphosphate biosynthesis; dimethylallyl diphosphate from isopentenyl diphosphate: step 1/1. Its function is as follows. Catalyzes the 1,3-allylic rearrangement of the homoallylic substrate isopentenyl (IPP) to its highly electrophilic allylic isomer, dimethylallyl diphosphate (DMAPP). This Escherichia coli O45:K1 (strain S88 / ExPEC) protein is Isopentenyl-diphosphate Delta-isomerase.